A 273-amino-acid polypeptide reads, in one-letter code: Zinc finger protein 80 (273 aa).

The C2H2-type 1 zinc-finger motif lies at 49–71; it reads YKCKECGSVFNKNSLLVRHQQIH. The C2H2-type 2; degenerate zinc finger occupies 77–99; that stretch reads YEYQECGKAFPEKVDFVRHMRIH. A C2H2-type 3; atypical zinc finger spans residues 105-127; sequence CKCVECRKVFNRRSHLLCYRQIH. 4 C2H2-type zinc fingers span residues 133-155, 161-183, 187-211, and 217-239; these read YECS…RVTH, FGCK…MKIH, KPCK…SMTH, and YECK…TRSH.

It belongs to the krueppel C2H2-type zinc-finger protein family.

The protein resides in the nucleus. In terms of biological role, may be involved in transcriptional regulation. The chain is Zinc finger protein 80 (ZNF80) from Pan troglodytes (Chimpanzee).